The following is a 421-amino-acid chain: Diaminopimelate decarboxylase (421 aa).

K63 is subject to N6-(pyridoxal phosphate)lysine. Residues G242 and 278 to 281 contribute to the pyridoxal 5'-phosphate site; that span reads EPGR. Positions 281, 317, and 321 each coordinate substrate. The active-site Proton donor is C346. 2 residues coordinate substrate: E347 and Y375. Pyridoxal 5'-phosphate is bound at residue Y375.

It belongs to the Orn/Lys/Arg decarboxylase class-II family. LysA subfamily. Homodimer. Pyridoxal 5'-phosphate serves as cofactor.

The catalysed reaction is meso-2,6-diaminopimelate + H(+) = L-lysine + CO2. It participates in amino-acid biosynthesis; L-lysine biosynthesis via DAP pathway; L-lysine from DL-2,6-diaminopimelate: step 1/1. Its function is as follows. Specifically catalyzes the decarboxylation of meso-diaminopimelate (meso-DAP) to L-lysine. The chain is Diaminopimelate decarboxylase from Zymomonas mobilis subsp. mobilis (strain ATCC 31821 / ZM4 / CP4).